The sequence spans 463 residues: ATP synthase subunit beta (463 aa).

152 to 159 is a binding site for ATP; that stretch reads GGAGVGKT.

This sequence belongs to the ATPase alpha/beta chains family. As to quaternary structure, F-type ATPases have 2 components, CF(1) - the catalytic core - and CF(0) - the membrane proton channel. CF(1) has five subunits: alpha(3), beta(3), gamma(1), delta(1), epsilon(1). CF(0) has three main subunits: a(1), b(2) and c(9-12). The alpha and beta chains form an alternating ring which encloses part of the gamma chain. CF(1) is attached to CF(0) by a central stalk formed by the gamma and epsilon chains, while a peripheral stalk is formed by the delta and b chains.

It is found in the cell membrane. The catalysed reaction is ATP + H2O + 4 H(+)(in) = ADP + phosphate + 5 H(+)(out). Its function is as follows. Produces ATP from ADP in the presence of a proton gradient across the membrane. The catalytic sites are hosted primarily by the beta subunits. The polypeptide is ATP synthase subunit beta (Clostridium botulinum (strain Eklund 17B / Type B)).